A 127-amino-acid chain; its full sequence is Calcitonin receptor-stimulating peptide 1 (127 aa).

The N-terminal stretch at 1-25 is a signal peptide; it reads MGFWKFSPFLVLGILALYQVGFLQA. Residues 26 to 79 constitute a propeptide that is removed on maturation; the sequence is APFRSALENPPDSGVRNEEELRLLLAAVMKDYMQMKTHELEQEQETEGSRVAVQ. C83 and C88 are oxidised to a cystine.

The protein belongs to the calcitonin family.

It localises to the secreted. Stimulates cAMP production in porcine kidney cell line LLC-PK1 via the calcitonin receptor (CT) but not via the CT-like (CL) receptor. This chain is Calcitonin receptor-stimulating peptide 1 (CRSP1), found in Canis lupus familiaris (Dog).